We begin with the raw amino-acid sequence, 353 residues long: GDSL esterase/lipase APG (353 aa).

Residues 1 to 25 form the signal peptide; it reads MDRCTSSFLLLTLVSTLSILQISFA. Ser37 serves as the catalytic Nucleophile. Residues Asn197 and Asn320 are each glycosylated (N-linked (GlcNAc...) asparagine). Catalysis depends on residues Asp328 and His331.

The protein belongs to the 'GDSL' lipolytic enzyme family.

The protein localises to the secreted. This Arabidopsis thaliana (Mouse-ear cress) protein is GDSL esterase/lipase APG (APG).